Here is a 47-residue protein sequence, read N- to C-terminus: Large ribosomal subunit protein bL34 (47 aa).

The protein belongs to the bacterial ribosomal protein bL34 family.

The chain is Large ribosomal subunit protein bL34 from Rhodococcus erythropolis (strain PR4 / NBRC 100887).